The primary structure comprises 61 residues: Small ribosomal subunit protein uS14 (61 aa).

Positions 24, 27, 40, and 43 each coordinate Zn(2+).

This sequence belongs to the universal ribosomal protein uS14 family. Zinc-binding uS14 subfamily. As to quaternary structure, part of the 30S ribosomal subunit. Contacts proteins S3 and S10. The cofactor is Zn(2+).

Binds 16S rRNA, required for the assembly of 30S particles and may also be responsible for determining the conformation of the 16S rRNA at the A site. In Borreliella burgdorferi (strain ATCC 35210 / DSM 4680 / CIP 102532 / B31) (Borrelia burgdorferi), this protein is Small ribosomal subunit protein uS14.